A 227-amino-acid chain; its full sequence is UPF0173 metal-dependent hydrolase Tlet_1100 (227 aa).

It belongs to the UPF0173 family.

The sequence is that of UPF0173 metal-dependent hydrolase Tlet_1100 from Pseudothermotoga lettingae (strain ATCC BAA-301 / DSM 14385 / NBRC 107922 / TMO) (Thermotoga lettingae).